Reading from the N-terminus, the 83-residue chain is Cardiotoxin 7a (83 aa).

The signal sequence occupies residues 1–21; the sequence is MKTLLLTLVVVTIVCLDLGYT. 4 cysteine pairs are disulfide-bonded: cysteine 24/cysteine 43, cysteine 36/cysteine 61, cysteine 65/cysteine 76, and cysteine 77/cysteine 82.

The protein belongs to the three-finger toxin family. Short-chain subfamily. Orphan group XV sub-subfamily. In terms of tissue distribution, expressed by the venom gland.

It is found in the secreted. It localises to the target cell membrane. Its function is as follows. Has low cytotoxic activity. This chain is Cardiotoxin 7a, found in Naja atra (Chinese cobra).